The chain runs to 329 residues: Phenylalanine--tRNA ligase alpha subunit (329 aa).

A Mg(2+)-binding site is contributed by Glu254.

Belongs to the class-II aminoacyl-tRNA synthetase family. Phe-tRNA synthetase alpha subunit type 1 subfamily. As to quaternary structure, tetramer of two alpha and two beta subunits. Mg(2+) is required as a cofactor.

Its subcellular location is the cytoplasm. The catalysed reaction is tRNA(Phe) + L-phenylalanine + ATP = L-phenylalanyl-tRNA(Phe) + AMP + diphosphate + H(+). This Actinobacillus succinogenes (strain ATCC 55618 / DSM 22257 / CCUG 43843 / 130Z) protein is Phenylalanine--tRNA ligase alpha subunit.